The sequence spans 569 residues: Lysine--tRNA ligase (569 aa).

Glutamate 414 and glutamate 421 together coordinate Mg(2+).

It belongs to the class-II aminoacyl-tRNA synthetase family. In terms of assembly, homodimer. Requires Mg(2+) as cofactor.

It is found in the cytoplasm. It carries out the reaction tRNA(Lys) + L-lysine + ATP = L-lysyl-tRNA(Lys) + AMP + diphosphate. The protein is Lysine--tRNA ligase of Christiangramia forsetii (strain DSM 17595 / CGMCC 1.15422 / KT0803) (Gramella forsetii).